We begin with the raw amino-acid sequence, 122 residues long: ATP synthase epsilon chain (122 aa).

Belongs to the ATPase epsilon chain family. F-type ATPases have 2 components, CF(1) - the catalytic core - and CF(0) - the membrane proton channel. CF(1) has five subunits: alpha(3), beta(3), gamma(1), delta(1), epsilon(1). CF(0) has three main subunits: a, b and c.

The protein resides in the cell membrane. In terms of biological role, produces ATP from ADP in the presence of a proton gradient across the membrane. The polypeptide is ATP synthase epsilon chain (Rhodococcus erythropolis (strain PR4 / NBRC 100887)).